The chain runs to 249 residues: Eukaryotic translation initiation factor 6 (249 aa).

It belongs to the eIF-6 family. As to quaternary structure, monomer. Associates with the 60S ribosomal subunit.

Its subcellular location is the cytoplasm. It localises to the nucleus. The protein localises to the nucleolus. Its function is as follows. Binds to the 60S ribosomal subunit and prevents its association with the 40S ribosomal subunit to form the 80S initiation complex in the cytoplasm. May also be involved in ribosome biogenesis. The protein is Eukaryotic translation initiation factor 6 of Babesia bovis.